The following is a 176-amino-acid chain: Adenine phosphoribosyltransferase (176 aa).

This sequence belongs to the purine/pyrimidine phosphoribosyltransferase family. In terms of assembly, homodimer.

Its subcellular location is the cytoplasm. It carries out the reaction AMP + diphosphate = 5-phospho-alpha-D-ribose 1-diphosphate + adenine. It participates in purine metabolism; AMP biosynthesis via salvage pathway; AMP from adenine: step 1/1. In terms of biological role, catalyzes a salvage reaction resulting in the formation of AMP, that is energically less costly than de novo synthesis. This chain is Adenine phosphoribosyltransferase, found in Borreliella burgdorferi (strain ZS7) (Borrelia burgdorferi).